The chain runs to 332 residues: Beta-chimaerin (332 aa).

A Phorbol-ester/DAG-type zinc finger spans residues 78–128; it reads THNFKVHTFRGPHWCEYCANFMWGLIAQGVRCSDCGLNVHKQCSKHVPNDC. The region spanning 141-332 is the Rho-GAP domain; it reads CDLTTLVKAH…ILIENEDVLF (192 aa).

The protein resides in the membrane. In the inactive state, the N terminus protrudes into the active site of the Rho-GAP domain, sterically blocking Rac binding. Phospholipid binding to the Phorbol-ester/DAG-type zinc-finger/C1 domain triggers the cooperative dissociation of these interactions, allowing the N-terminus to move out of the active site and thereby activating the enzyme. In terms of biological role, GTPase-activating protein for p21-rac. This chain is Beta-chimaerin (Chn2), found in Mus musculus (Mouse).